The primary structure comprises 502 residues: 9-beta-pimara-7,15-diene oxidase (502 aa).

2 helical membrane-spanning segments follow: residues 4 to 26 (INSE…ALLT) and 106 to 128 (LLVS…GAYW). C438 contributes to the heme binding site.

Belongs to the cytochrome P450 family. Heme serves as cofactor.

It localises to the membrane. The enzyme catalyses 9beta-pimara-7,15-diene + 3 reduced [NADPH--hemoprotein reductase] + 3 O2 = 9beta-pimara-7,15-dien-19-oate + 3 oxidized [NADPH--hemoprotein reductase] + 4 H2O + 4 H(+). Its function is as follows. Involved in momilactone phytoalexins biosynthesis; acts as a multifunctional diterpene oxidase. Participates in the biosynthetic steps between 9-beta-pimara-7,15-diene and 3-beta-hydroxy-9-beta-pimara-7,15-dien-19,6-beta-olide. Also catalyzes consecutive oxidations at C19 of syn-stemod-13(17)-ene. This chain is 9-beta-pimara-7,15-diene oxidase (CYP99A3), found in Oryza sativa subsp. japonica (Rice).